Reading from the N-terminus, the 143-residue chain is Nucleoside diphosphate kinase (143 aa).

ATP contacts are provided by K11, F59, R87, T93, R104, and N114. H117 serves as the catalytic Pros-phosphohistidine intermediate.

Belongs to the NDK family. Homotetramer. Mg(2+) serves as cofactor.

Its subcellular location is the cytoplasm. It catalyses the reaction a 2'-deoxyribonucleoside 5'-diphosphate + ATP = a 2'-deoxyribonucleoside 5'-triphosphate + ADP. It carries out the reaction a ribonucleoside 5'-diphosphate + ATP = a ribonucleoside 5'-triphosphate + ADP. In terms of biological role, major role in the synthesis of nucleoside triphosphates other than ATP. The ATP gamma phosphate is transferred to the NDP beta phosphate via a ping-pong mechanism, using a phosphorylated active-site intermediate. This Edwardsiella ictaluri (strain 93-146) protein is Nucleoside diphosphate kinase.